Consider the following 205-residue polypeptide: LexA repressor (205 aa).

A DNA-binding region (H-T-H motif) is located at residues 28 to 48 (RAEIAASLGFRSPNAAEEHLK). Active-site for autocatalytic cleavage activity residues include serine 122 and lysine 159.

The protein belongs to the peptidase S24 family. Homodimer.

The enzyme catalyses Hydrolysis of Ala-|-Gly bond in repressor LexA.. Functionally, represses a number of genes involved in the response to DNA damage (SOS response), including recA and lexA. Binds to the 16 bp palindromic sequence 5'-CTGTATATATATACAG-3'. In the presence of single-stranded DNA, RecA interacts with LexA causing an autocatalytic cleavage which disrupts the DNA-binding part of LexA, leading to derepression of the SOS regulon and eventually DNA repair. In Providencia rettgeri, this protein is LexA repressor.